Reading from the N-terminus, the 446-residue chain is Adenylosuccinate synthetase (446 aa).

Residues 21 to 27 (GDEGKGK) and 49 to 51 (GHT) contribute to the GTP site. The active-site Proton acceptor is the Asp-22. Residues Asp-22 and Gly-49 each coordinate Mg(2+). IMP contacts are provided by residues 22–25 (DEGK), 47–50 (NAGH), Thr-141, Arg-155, Gln-236, Thr-251, and Arg-319. The active-site Proton donor is the His-50. 315 to 321 (VTTGRSR) lines the substrate pocket. GTP-binding positions include Arg-321, 347 to 349 (KLD), and 429 to 431 (STS).

The protein belongs to the adenylosuccinate synthetase family. In terms of assembly, homodimer. It depends on Mg(2+) as a cofactor.

The protein localises to the cytoplasm. It carries out the reaction IMP + L-aspartate + GTP = N(6)-(1,2-dicarboxyethyl)-AMP + GDP + phosphate + 2 H(+). Its pathway is purine metabolism; AMP biosynthesis via de novo pathway; AMP from IMP: step 1/2. Plays an important role in the de novo pathway of purine nucleotide biosynthesis. Catalyzes the first committed step in the biosynthesis of AMP from IMP. The polypeptide is Adenylosuccinate synthetase (Polaromonas sp. (strain JS666 / ATCC BAA-500)).